The sequence spans 271 residues: Probable iron transport system membrane protein HI_0359 (271 aa).

8 helical membrane passes run 17-37 (ALLT…YLVL), 55-75 (IVLA…SGIF), 93-113 (TAMG…FTKI), 131-151 (SHQE…LIVF), 168-188 (VAGL…ALTI), 194-214 (VVGV…ALTL), 221-241 (MLWV…ILSY), and 245-265 (ASTG…ALAY).

Belongs to the ABC-3 integral membrane protein family.

The protein resides in the cell inner membrane. Its function is as follows. Part of an ATP-driven transport system HI_0359/HI_0360/HI_0361/HI_0362 for iron. This is Probable iron transport system membrane protein HI_0359 from Haemophilus influenzae (strain ATCC 51907 / DSM 11121 / KW20 / Rd).